Here is a 388-residue protein sequence, read N- to C-terminus: Ectopic P granules protein 6 (388 aa).

Residues 1 to 25 (MSKKEETIFFRIEKENRPESSKKEE) are compositionally biased toward basic and acidic residues. The tract at residues 1 to 33 (MSKKEETIFFRIEKENRPESSKKEEDENSTEEM) is disordered. One copy of the WD 1 repeat lies at 217–257 (AHLTDIAQVALNCQGTLVATGSTKGTVIRVFDARTKGPLYE). Positions 258-261 (LRRG) match the LRRG motif motif. The stretch at 262 to 301 (TVQAHLQCMAFSPCSSYLAVASDKGTLHMFGIRDAEPQKK) is one WD 2 repeat. Positions 265–328 (AHLQCMAFSP…LDRPVMAIGF (64 aa)) are required for atg-2 binding.

The protein belongs to the WD repeat PROPPIN family. Interacts with atg-2; the interaction is direct. As to expression, widely expressed in tissues including pharyngeal, muscle and neuronal tissues.

The protein resides in the cytoplasm. It is found in the preautophagosomal structure membrane. Component of the epg-6/atg-2 complex, which is involved in the generation of autophagosomes from omegasomes and in the distribution of atg-9 and atg-13 during the autophagy-mediated degradation of protein aggregates. Binds to phosphatidylinositols on preautophagosomes, which are early autophagic structures, to promote autophagosome formation. In particular, binds with high affinity to phosphatidylinositols including phosphatidylinositol 3-phosphate (PtdIns(3)P) and phosphatidylinositol 5-phosphate (PtdIns(5)P), but more weakly to phosphatidylinositol 4-phosphate (PtdIns(4)P) and phosphatidylinositol 3,5-bisphosphate (PtdIns(3,5)P2). Involved in autophagy-mediated degradation of ribosomal RNA and ribosomal proteins in lysosomes, which is essential for maintaining nucleotide homeostasis. This chain is Ectopic P granules protein 6, found in Caenorhabditis elegans.